Consider the following 293-residue polypeptide: Ribosomal protein L11 methyltransferase (293 aa).

S-adenosyl-L-methionine contacts are provided by T145, G166, D188, and N230.

Belongs to the methyltransferase superfamily. PrmA family.

Its subcellular location is the cytoplasm. It catalyses the reaction L-lysyl-[protein] + 3 S-adenosyl-L-methionine = N(6),N(6),N(6)-trimethyl-L-lysyl-[protein] + 3 S-adenosyl-L-homocysteine + 3 H(+). Functionally, methylates ribosomal protein L11. The chain is Ribosomal protein L11 methyltransferase from Shigella sonnei (strain Ss046).